The chain runs to 156 residues: ATP synthase subunit b (156 aa).

The helical transmembrane segment at 12–32 (VAFFIFVIFCMKFVWPPVIAA) threads the bilayer.

Belongs to the ATPase B chain family. In terms of assembly, F-type ATPases have 2 components, F(1) - the catalytic core - and F(0) - the membrane proton channel. F(1) has five subunits: alpha(3), beta(3), gamma(1), delta(1), epsilon(1). F(0) has three main subunits: a(1), b(2) and c(10-14). The alpha and beta chains form an alternating ring which encloses part of the gamma chain. F(1) is attached to F(0) by a central stalk formed by the gamma and epsilon chains, while a peripheral stalk is formed by the delta and b chains.

The protein localises to the cell inner membrane. In terms of biological role, f(1)F(0) ATP synthase produces ATP from ADP in the presence of a proton or sodium gradient. F-type ATPases consist of two structural domains, F(1) containing the extramembraneous catalytic core and F(0) containing the membrane proton channel, linked together by a central stalk and a peripheral stalk. During catalysis, ATP synthesis in the catalytic domain of F(1) is coupled via a rotary mechanism of the central stalk subunits to proton translocation. Component of the F(0) channel, it forms part of the peripheral stalk, linking F(1) to F(0). This Pseudomonas savastanoi pv. phaseolicola (strain 1448A / Race 6) (Pseudomonas syringae pv. phaseolicola (strain 1448A / Race 6)) protein is ATP synthase subunit b.